We begin with the raw amino-acid sequence, 63 residues long: Putative alpha-neurotoxin RjAa9 (63 aa).

Residues 1-60 (KEGYPVDWGNCKYECMSDEYCKDLCADRKATSGYCYKLNWSCYCKGLPDDSPIKTPGKCR) form the LCN-type CS-alpha/beta domain. Disulfide bonds link C11/C59, C15/C35, C21/C42, and C25/C44.

The protein belongs to the long (4 C-C) scorpion toxin superfamily. Sodium channel inhibitor family. Alpha subfamily. As to expression, expressed by the venom gland.

It is found in the secreted. Its function is as follows. Alpha toxins bind voltage-independently at site-3 of sodium channels (Nav) and inhibits the inactivation of the activated channels, thereby blocking neuronal transmission. The protein is Putative alpha-neurotoxin RjAa9 of Rhopalurus junceus (Caribbean blue scorpion).